A 449-amino-acid polypeptide reads, in one-letter code: MREILHVQGGQCGNQIGSKFWEVICDEHGIDQTGKYISEGGSDTQLERINVYYNEASGGRYVPRAVLMDLEPGTMESIRSGPFGKIFRPDNFVFGQSGAGNNWAKGHYTEGAELIDSVLDVVRKEAENCDCLQGFQVCHSLGGGTGSGMGTLLISKIREEYPDRMMLTFSVFPSPKVSDTVVEPYNATLSVHQLVENADECMVLDNEALYDICFRTLKLSTPSFGDLNHLISATMSGVTCCLRFPGQLNSDLRKLAVNLIPFPRLHFFMVGFAPLTSRGSQQYVSLTVPELTQQMWDAKNMMCAADPRHGRYLTASAMFRGKMSTKEVDEQIINVQNKNSSYFVEWIPNNVKSSVCDIPPKNLKMSSTFIGNSTSIQEMFRRVSEQFTAMFRRKAFLHWYTGEGMDEMEFTEAESNMNDLVAEYQQYQDAIAEEEDEYEEEGEEQYDEQ.

The GTP site is built by glutamine 11, glutamate 71, serine 140, glycine 144, threonine 145, glycine 146, asparagine 206, and asparagine 228. Glutamate 71 provides a ligand contact to Mg(2+).

Belongs to the tubulin family. In terms of assembly, dimer of alpha and beta chains. A typical microtubule is a hollow water-filled tube with an outer diameter of 25 nm and an inner diameter of 15 nM. Alpha-beta heterodimers associate head-to-tail to form protofilaments running lengthwise along the microtubule wall with the beta-tubulin subunit facing the microtubule plus end conferring a structural polarity. Microtubules usually have 13 protofilaments but different protofilament numbers can be found in some organisms and specialized cells. Mg(2+) serves as cofactor.

The protein resides in the cytoplasm. It is found in the cytoskeleton. Its function is as follows. Tubulin is the major constituent of microtubules, a cylinder consisting of laterally associated linear protofilaments composed of alpha- and beta-tubulin heterodimers. Microtubules grow by the addition of GTP-tubulin dimers to the microtubule end, where a stabilizing cap forms. Below the cap, tubulin dimers are in GDP-bound state, owing to GTPase activity of alpha-tubulin. This Cicer arietinum (Chickpea) protein is Tubulin beta chain (TUBB).